The chain runs to 3255 residues: Genome polyprotein (3255 aa).

A Peptidase S30 domain is found at 292–437 (VMNQQTLMAF…HSITHRMVQY (146 aa)). Residues H345, D354, and S388 each act as for P1 proteinase activity in the active site. The Involved in interaction with stylet and aphid transmission motif lies at 489–492 (KITC). The short motif at 747–749 (PTK) is the Involved in virions binding and aphid transmission element. A Peptidase C6 domain is found at 773-895 (MFVTKDGYCY…ESEMQHYRVG (123 aa)). Residues C781 and H854 each act as for helper component proteinase activity in the active site. In terms of domain architecture, Helicase ATP-binding spans 1397-1549 (EIAHNEYRDI…PMHMVDIATE (153 aa)). 1410–1417 (GGVGSGKS) provides a ligand contact to ATP. Residues 1499–1502 (DECH) carry the DECH box motif. The region spanning 1568–1727 (DATKKGDNIL…GLPVMTSNVS (160 aa)) is the Helicase C-terminal domain. The short motif at 2062 to 2069 (EKGKKSGK) is the Nuclear localization signal element. At Y2084 the chain carries O-(5'-phospho-RNA)-tyrosine. Residues 2215–2433 (SKTLFRGLRD…MVWGGINLIN (219 aa)) enclose the Peptidase C4 domain. Active-site for nuclear inclusion protein A activity residues include H2260, D2295, and C2365. The region spanning 2699–2823 (WVYCDADGSQ…AIKPEHESLL (125 aa)) is the RdRp catalytic domain. A disordered region spans residues 2980 to 3028 (AKLDAGQGSKTDDKQKNSADPKDNIITEKGSGSGQMKKDDDINAGLHGK). Positions 2989–3005 (KTDDKQKNSADPKDNII) are enriched in basic and acidic residues. Residue T3237 is modified to Phosphothreonine.

Belongs to the potyviridae genome polyprotein family. In terms of assembly, interacts with host eIF4E protein (via cap-binding region); this interaction mediates the translation of the VPg-viral RNA conjugates. Part of a complex that comprises VPg, RNA, host EIF4E and EIF4G; this interaction mediates the translation of the VPg-viral RNA conjugates. VPg is uridylylated by the polymerase and is covalently attached to the 5'-end of the genomic RNA. This uridylylated form acts as a nucleotide-peptide primer for the polymerase. In terms of processing, potyviral RNA is expressed as two polyproteins which undergo post-translational proteolytic processing. Genome polyprotein is processed by NIa-pro, P1 and HC-pro proteinases resulting in the production of at least ten individual proteins. P3N-PIPO polyprotein is cleaved by P1 and HC-pro proteinases resulting in the production of three individual proteins. The P1 proteinase and the HC-pro cleave only their respective C-termini autocatalytically. 6K1 is essential for proper proteolytic separation of P3 from CI.

The protein resides in the host cytoplasmic vesicle. The protein localises to the host nucleus. It is found in the virion. It catalyses the reaction RNA(n) + a ribonucleoside 5'-triphosphate = RNA(n+1) + diphosphate. The catalysed reaction is Hydrolyzes glutaminyl bonds, and activity is further restricted by preferences for the amino acids in P6 - P1' that vary with the species of potyvirus, e.g. Glu-Xaa-Xaa-Tyr-Xaa-Gln-|-(Ser or Gly) for the enzyme from tobacco etch virus. The natural substrate is the viral polyprotein, but other proteins and oligopeptides containing the appropriate consensus sequence are also cleaved.. It carries out the reaction Hydrolyzes a Gly-|-Gly bond at its own C-terminus, commonly in the sequence -Tyr-Xaa-Val-Gly-|-Gly, in the processing of the potyviral polyprotein.. Functionally, required for aphid transmission and also has proteolytic activity. Only cleaves a Gly-Gly dipeptide at its own C-terminus. Interacts with virions and aphid stylets. Acts as a suppressor of RNA-mediated gene silencing, also known as post-transcriptional gene silencing (PTGS), a mechanism of plant viral defense that limits the accumulation of viral RNAs. May have RNA-binding activity. Has helicase activity. It may be involved in replication. In terms of biological role, indispensable for virus replication. Reduces the abundance of host transcripts related to jasmonic acid biosynthesis therefore altering the host defenses. In order to increase its own stability, decreases host protein degradation pathways. Its function is as follows. Indispensable for virus replication. Functionally, mediates the cap-independent, EIF4E-dependent translation of viral genomic RNAs. Binds to the cap-binding site of host EIF4E and thus interferes with the host EIF4E-dependent mRNA export and translation. VPg-RNA directly binds EIF4E and is a template for transcription. Also forms trimeric complexes with EIF4E-EIF4G, which are templates for translation. Has RNA-binding and proteolytic activities. In terms of biological role, an RNA-dependent RNA polymerase that plays an essential role in the virus replication. Its function is as follows. Involved in aphid transmission, cell-to-cell and systemis movement, encapsidation of the viral RNA and in the regulation of viral RNA amplification. This chain is Genome polyprotein, found in Lettuce mosaic virus (strain 0 / isolate French) (LMV).